The primary structure comprises 358 residues: MTPRTRTDLDTITAYVPGKSYPGAIKLASNETTLGPLPSVRDAIADAAANANRYPDNGHVALIAAIADHFGVATANVAVGAGSVSLCQELVHATCNDGDEVMFAWRSFEAYPVVTRVAGAVPVTVPLTADYRHDLDAMAAAVTDRTRLIFVCTPNNPTGPALSTSELERFLDAVPDRVVVALDEAYFEYNRSGTDGLDLFRRYPNVVVLRTFSKAYGLAGLRVGYAIADAAIVAALSKVHIAFTVNAVAQAAAIASLAASGELLARTDGVVAERNRVRDALLAAGYEVPESDANFVYLPLGSRSGAFGAASAEAGVLLRPYGDDGVRITIGDPEENDAFLAFATSTEARSIANVAVRA.

Lysine 214 bears the N6-(pyridoxal phosphate)lysine mark.

It belongs to the class-II pyridoxal-phosphate-dependent aminotransferase family. Homodimer. It depends on pyridoxal 5'-phosphate as a cofactor.

It catalyses the reaction an aromatic L-alpha-amino acid + 2-oxoglutarate = an aromatic oxo-acid + L-glutamate. Functionally, aminotransferase that catalyzes the conversion of aromatic amino acids and 2-oxoglutarate into corresponding aromatic oxo acids and L-glutamate. In Rhodococcus opacus (strain B4), this protein is Aromatic amino acid aminotransferase.